The chain runs to 454 residues: Asparagine--tRNA ligase (454 aa).

Belongs to the class-II aminoacyl-tRNA synthetase family. Homodimer.

Its subcellular location is the cytoplasm. The catalysed reaction is tRNA(Asn) + L-asparagine + ATP = L-asparaginyl-tRNA(Asn) + AMP + diphosphate + H(+). The protein is Asparagine--tRNA ligase of Mesoplasma florum (strain ATCC 33453 / NBRC 100688 / NCTC 11704 / L1) (Acholeplasma florum).